A 174-amino-acid polypeptide reads, in one-letter code: Fimbria A protein (174 aa).

Residues 1 to 22 (MKLNKIMLATVLAFGVSSLANA) form the signal peptide. The cysteines at positions 41 and 80 are disulfide-linked.

It belongs to the fimbrial protein family.

The protein resides in the fimbrium. Functionally, major structural component of mannose-resistant fimbriae of Serratia marcescens. The polypeptide is Fimbria A protein (smfA) (Serratia marcescens).